The primary structure comprises 421 residues: Probable N-acetylgalactosaminyltransferase 8 (421 aa).

At Met1–Arg3 the chain is on the cytoplasmic side. The chain crosses the membrane as a helical; Signal-anchor for type II membrane protein span at residues His4–Lys24. The Lumenal segment spans residues Leu25–Leu421. N-linked (GlcNAc...) asparagine glycans are attached at residues Asn52 and Asn58. Disulfide bonds link Cys98-Cys331 and Cys322-Cys399. The catalytic subdomain A stretch occupies residues Ser106–Pro219. Substrate is bound by residues Asp147 and Arg180. Residue Asp203 coordinates Mn(2+). Ser204 lines the substrate pocket. Mn(2+) is bound at residue His205. Residues Pro277–Arg339 form a catalytic subdomain B region. Trp308 lines the substrate pocket. Residue His336 coordinates Mn(2+). Substrate is bound by residues Arg339 and Tyr344. The Prevents secretion from ER signature appears at His418–Leu421.

This sequence belongs to the glycosyltransferase 2 family. GalNAc-T subfamily. It depends on Mn(2+) as a cofactor.

The protein resides in the golgi apparatus membrane. Its pathway is protein modification; protein glycosylation. Its function is as follows. Potential glycopeptide transferase involved in O-linked oligosaccharide biosynthesis. In contrast to other members of the family, it does not act as a peptide transferase that transfers GalNAc onto serine or threonine residue on peptides that have been tested. Some peptide transferase activity is however not excluded, considering that its appropriate peptide substrate may remain unidentified. This chain is Probable N-acetylgalactosaminyltransferase 8 (gly-8), found in Caenorhabditis elegans.